Reading from the N-terminus, the 119-residue chain is uncharacterized protein (119 aa).

Residues 1-30 form the signal peptide; the sequence is MCPECFFLMLCFCGYCSSSSSSFRSSPVYG.

This is an uncharacterized protein from Escherichia coli (strain UTI89 / UPEC).